Reading from the N-terminus, the 292-residue chain is Small ribosomal subunit biogenesis GTPase RsgA (292 aa).

The region spanning 64–221 is the CP-type G domain; sequence RSELFRPAVA…LVDTPGFSSL (158 aa). GTP is bound by residues 113-116 and 164-172; these read NKMD and GPSGVGKST. 4 residues coordinate Zn(2+): cysteine 245, cysteine 250, histidine 252, and cysteine 258.

Belongs to the TRAFAC class YlqF/YawG GTPase family. RsgA subfamily. Monomer. Associates with 30S ribosomal subunit, binds 16S rRNA. The cofactor is Zn(2+).

The protein resides in the cytoplasm. Functionally, one of several proteins that assist in the late maturation steps of the functional core of the 30S ribosomal subunit. Helps release RbfA from mature subunits. May play a role in the assembly of ribosomal proteins into the subunit. Circularly permuted GTPase that catalyzes slow GTP hydrolysis, GTPase activity is stimulated by the 30S ribosomal subunit. The polypeptide is Small ribosomal subunit biogenesis GTPase RsgA (Clostridium botulinum (strain 657 / Type Ba4)).